Here is a 20-residue protein sequence, read N- to C-terminus: T cell receptor alpha joining 3 (20 aa).

As to quaternary structure, alpha-beta TR is a heterodimer composed of an alpha and beta chain; disulfide-linked. The alpha-beta TR is associated with the transmembrane signaling CD3 coreceptor proteins to form the TR-CD3 (TcR or TCR). The assembly of alpha-beta TR heterodimers with CD3 occurs in the endoplasmic reticulum where a single alpha-beta TR heterodimer associates with one CD3D-CD3E heterodimer, one CD3G-CD3E heterodimer and one CD247 homodimer forming a stable octameric structure. CD3D-CD3E and CD3G-CD3E heterodimers preferentially associate with TR alpha and TR beta chains, respectively. The association of the CD247 homodimer is the last step of TcR assembly in the endoplasmic reticulum and is required for transport to the cell surface.

It localises to the cell membrane. J region of the variable domain of T cell receptor (TR) alpha chain that participates in the antigen recognition. Alpha-beta T cell receptors are antigen specific receptors which are essential to the immune response and are present on the cell surface of T lymphocytes. Recognize peptide-major histocompatibility (MH) (pMH) complexes that are displayed by antigen presenting cells (APC), a prerequisite for efficient T cell adaptive immunity against pathogens. Binding of alpha-beta TR to pMH complex initiates TR-CD3 clustering on the cell surface and intracellular activation of LCK that phosphorylates the ITAM motifs of CD3G, CD3D, CD3E and CD247 enabling the recruitment of ZAP70. In turn ZAP70 phosphorylates LAT, which recruits numerous signaling molecules to form the LAT signalosome. The LAT signalosome propagates signal branching to three major signaling pathways, the calcium, the mitogen-activated protein kinase (MAPK) kinase and the nuclear factor NF-kappa-B (NF-kB) pathways, leading to the mobilization of transcription factors that are critical for gene expression and essential for T cell growth and differentiation. The T cell repertoire is generated in the thymus, by V-(D)-J rearrangement. This repertoire is then shaped by intrathymic selection events to generate a peripheral T cell pool of self-MH restricted, non-autoaggressive T cells. Post-thymic interaction of alpha-beta TR with the pMH complexes shapes TR structural and functional avidity. In Homo sapiens (Human), this protein is T cell receptor alpha joining 3.